The following is a 329-amino-acid chain: MSASPLKVAVTGAAGQIGYSLLFRLASGSLLGPDRPIELRLLEIEPALKALEGVVMELDDCAFPLLSGVEIGADPNKIFDGANLALLVGARPRGPGMERSDLLEANGAIFTAQGKALNEVAADDIRVGVTGNPANTNALIAMSNAPDIPRERFSALTRLDHNRAISQLAKKTGAKVTDIKKMTIWGNHSATQYPDIFHAEVKGKNAAEVVGDQNWIENDFIPTVAKRGAAIIDARGASSAASAASATTDAARDWLLGTPAGDWVSMAVISDGSYGVPEGLISSFPVTTKDGDWTIVQGLEIDEFSRSRIDKTTAELADERNAVTQLGLI.

An NAD(+)-binding site is contributed by 12–18 (GAAGQIG). Arg93 and Arg99 together coordinate substrate. NAD(+)-binding positions include Asn106, Gln113, and 130–132 (TGN). Substrate-binding residues include Asn132 and Arg163. His188 acts as the Proton acceptor in catalysis.

Belongs to the LDH/MDH superfamily. MDH type 2 family.

The enzyme catalyses (S)-malate + NAD(+) = oxaloacetate + NADH + H(+). Catalyzes the reversible oxidation of malate to oxaloacetate. In Mycolicibacterium paratuberculosis (strain ATCC BAA-968 / K-10) (Mycobacterium paratuberculosis), this protein is Malate dehydrogenase.